The chain runs to 297 residues: GTPase Era (297 aa).

The region spanning 3–171 is the Era-type G domain; the sequence is KSGFVSIVGR…IKVIQNYLEE (169 aa). A G1 region spans residues 11–18; the sequence is GRPNVGKS. 11–18 is a GTP binding site; that stretch reads GRPNVGKS. The G2 stretch occupies residues 37–41; the sequence is QTTRN. A G3 region spans residues 58 to 61; sequence DTPG. Residues 58–62 and 120–123 contribute to the GTP site; these read DTPGI and NKID. A G4 region spans residues 120-123; that stretch reads NKID. Residues 150-152 are G5; sequence ISA. One can recognise a KH type-2 domain in the interval 194–280; that stretch reads IREKVLHYLN…NLQLWVKVKE (87 aa).

Belongs to the TRAFAC class TrmE-Era-EngA-EngB-Septin-like GTPase superfamily. Era GTPase family. As to quaternary structure, monomer.

It localises to the cytoplasm. The protein resides in the cell membrane. An essential GTPase that binds both GDP and GTP, with rapid nucleotide exchange. Plays a role in 16S rRNA processing and 30S ribosomal subunit biogenesis and possibly also in cell cycle regulation and energy metabolism. This is GTPase Era from Clostridioides difficile (strain 630) (Peptoclostridium difficile).